Consider the following 146-residue polypeptide: Vascular endothelial growth factor A (146 aa).

Positions 1–26 are cleaved as a signal peptide; the sequence is MNFLLSWVHWSLALLLYLHHAKWSQA. Intrachain disulfides connect Cys-51/Cys-93, Cys-82/Cys-127, and Cys-86/Cys-129. Asn-100 is a glycosylation site (N-linked (GlcNAc...) asparagine).

It belongs to the PDGF/VEGF growth factor family. In terms of assembly, homodimer; disulfide-linked. Also found as heterodimer with PGF. Interacts with NRP1. Interacts with isoform 2 of BSG. Interacts with CD82; this interaction inhibits VEGFA-mediated signaling pathway.

Growth factor active in angiogenesis, vasculogenesis and endothelial cell growth. Induces endothelial cell proliferation, promotes cell migration, inhibits apoptosis and induces permeabilization of blood vessels. Binds to the FLT1/VEGFR1 and KDR/VEGFR2 receptors, heparan sulfate and heparin. Binding to NRP1 receptor initiates a signaling pathway needed for motor neuron axon guidance and cell body migration, including for the caudal migration of facial motor neurons from rhombomere 4 to rhombomere 6 during embryonic development. Also binds the DEAR/FBXW7-AS1 receptor. The protein is Vascular endothelial growth factor A (VEGFA) of Ovis aries (Sheep).